A 191-amino-acid polypeptide reads, in one-letter code: Protein G1-like1 (191 aa).

Residues 1–29 (MDMIGMASPAESPGGGGTARPSRYESQKR) form a disordered region. Residues 23-150 (RYESQKRRDW…ARGIAYEKKR (128 aa)) enclose the ALOG domain. The short motif at 148–152 (KKRRK) is the Nuclear localization signal element. Residues 152 to 179 (KRAAASHTKQKQQQQQLVEQAAAAAEAH) are a coiled coil.

It belongs to the plant homeotic and developmental regulators ALOG protein family.

It is found in the nucleus. In terms of biological role, probable transcription regulator that acts as a developmental regulator by promoting cell growth in response to light. This is Protein G1-like1 from Oryza sativa subsp. indica (Rice).